A 349-amino-acid polypeptide reads, in one-letter code: Protein-glutamate methylesterase/protein-glutamine glutaminase (349 aa).

Residues 2-118 (RVLVVDDSAL…VDLSSVAQEL (117 aa)) enclose the Response regulatory domain. Residue Asp-52 is modified to 4-aspartylphosphate. The region spanning 159 to 345 (VLIGSSTGGP…EEIVRFLEVK (187 aa)) is the CheB-type methylesterase domain. Residues Ser-164, His-191, and Asp-287 contribute to the active site.

The protein belongs to the CheB family. Phosphorylated by CheA. Phosphorylation of the N-terminal regulatory domain activates the methylesterase activity.

It is found in the cytoplasm. It carries out the reaction [protein]-L-glutamate 5-O-methyl ester + H2O = L-glutamyl-[protein] + methanol + H(+). It catalyses the reaction L-glutaminyl-[protein] + H2O = L-glutamyl-[protein] + NH4(+). Involved in chemotaxis. Part of a chemotaxis signal transduction system that modulates chemotaxis in response to various stimuli. Catalyzes the demethylation of specific methylglutamate residues introduced into the chemoreceptors (methyl-accepting chemotaxis proteins or MCP) by CheR. Also mediates the irreversible deamidation of specific glutamine residues to glutamic acid. The protein is Protein-glutamate methylesterase/protein-glutamine glutaminase of Archaeoglobus fulgidus (strain ATCC 49558 / DSM 4304 / JCM 9628 / NBRC 100126 / VC-16).